Reading from the N-terminus, the 592-residue chain is Protein alan shepard (592 aa).

Residues 1–68 (MGGPHHQHQQ…ASVAAAPPTP (68 aa)) form a disordered region. Residues 18-28 (VGGGNGHGGGA) are compositionally biased toward gly residues. Residues 36–54 (PNSQQLPPQMPRSQNYANG) are compositionally biased toward polar residues. Residues 55–64 (SSSAASVAAA) are compositionally biased toward low complexity. 2 positions are modified to phosphotyrosine: Tyr-124 and Tyr-140. The tract at residues 162 to 224 (PATTTYGQRV…AQNQNQQGGE (63 aa)) is disordered. The span at 176–224 (SPSNTNSSSSSNTGSQSGTLSTSLSNTTNTNTTMGPNGTAQNQNQQGGE) shows a compositional bias: low complexity. 2 consecutive RRM domains span residues 229-307 (TNLY…IWVL) and 319-398 (TNLY…FADG). Positions 565–592 (PMTDSEQASTAASPDEAYTQYPHQAAPK) are disordered.

In terms of biological role, has a role in the perception of gravity. This chain is Protein alan shepard, found in Drosophila mojavensis (Fruit fly).